The following is a 1320-amino-acid chain: Probable inactive ATP-dependent zinc metalloprotease FTSHI 5, chloroplastic (1320 aa).

The transit peptide at 1–43 (MDFISASSLSSPFSTQLSPIYLSSGIVSLKPRHRVKNRNFGSR) directs the protein to the chloroplast. 3 consecutive transmembrane segments (helical) span residues 571 to 591 (LYLK…WIPM), 633 to 653 (NIND…IIPY), and 695 to 715 (FQWF…LYHV). ATP is bound at residue 824-831 (GERGTGKT).

The protein in the N-terminal section; belongs to the AAA ATPase family. It in the C-terminal section; belongs to the peptidase M41 family. Oligomer.

Its subcellular location is the plastid. It is found in the chloroplast membrane. Its function is as follows. Required for plastid development during embryogenesis. Might be involved in chaperone functions or play a structural role in the thylakoid FtsH complex. The chain is Probable inactive ATP-dependent zinc metalloprotease FTSHI 5, chloroplastic from Arabidopsis thaliana (Mouse-ear cress).